We begin with the raw amino-acid sequence, 250 residues long: 1-(5-phosphoribosyl)-5-[(5-phosphoribosylamino)methylideneamino] imidazole-4-carboxamide isomerase (250 aa).

The active-site Proton acceptor is the Asp-10. The active-site Proton donor is Asp-131.

Belongs to the HisA/HisF family.

The protein resides in the cytoplasm. It catalyses the reaction 1-(5-phospho-beta-D-ribosyl)-5-[(5-phospho-beta-D-ribosylamino)methylideneamino]imidazole-4-carboxamide = 5-[(5-phospho-1-deoxy-D-ribulos-1-ylimino)methylamino]-1-(5-phospho-beta-D-ribosyl)imidazole-4-carboxamide. The protein operates within amino-acid biosynthesis; L-histidine biosynthesis; L-histidine from 5-phospho-alpha-D-ribose 1-diphosphate: step 4/9. This Desulfitobacterium hafniense (strain DSM 10664 / DCB-2) protein is 1-(5-phosphoribosyl)-5-[(5-phosphoribosylamino)methylideneamino] imidazole-4-carboxamide isomerase.